The sequence spans 137 residues: Cell division protein SepF (137 aa).

It belongs to the SepF family. In terms of assembly, homodimer. Interacts with FtsZ.

It localises to the cytoplasm. In terms of biological role, cell division protein that is part of the divisome complex and is recruited early to the Z-ring. Probably stimulates Z-ring formation, perhaps through the cross-linking of FtsZ protofilaments. Its function overlaps with FtsA. This is Cell division protein SepF from Carboxydothermus hydrogenoformans (strain ATCC BAA-161 / DSM 6008 / Z-2901).